The chain runs to 360 residues: Histidinol-phosphate aminotransferase (360 aa).

Lysine 208 is subject to N6-(pyridoxal phosphate)lysine.

Belongs to the class-II pyridoxal-phosphate-dependent aminotransferase family. Histidinol-phosphate aminotransferase subfamily. As to quaternary structure, homodimer. It depends on pyridoxal 5'-phosphate as a cofactor.

It catalyses the reaction L-histidinol phosphate + 2-oxoglutarate = 3-(imidazol-4-yl)-2-oxopropyl phosphate + L-glutamate. It participates in amino-acid biosynthesis; L-histidine biosynthesis; L-histidine from 5-phospho-alpha-D-ribose 1-diphosphate: step 7/9. The sequence is that of Histidinol-phosphate aminotransferase (hisC) from Lactococcus lactis subsp. lactis (strain IL1403) (Streptococcus lactis).